Consider the following 829-residue polypeptide: Translation initiation factor IF-2 (829 aa).

Over residues 128-137 (QNAEEEKVEA) the composition is skewed to basic and acidic residues. The tract at residues 128–157 (QNAEEEKVEASAKTVQNNEDIQPQTSKKKE) is disordered. The segment covering 140 to 152 (KTVQNNEDIQPQT) has biased composition (polar residues). Residues 327-497 (TRAPVVTVMG…LLIAEMQDLK (171 aa)) enclose the tr-type G domain. The segment at 336–343 (GHVDHGKT) is G1. 336–343 (GHVDHGKT) provides a ligand contact to GTP. Residues 361-365 (GITQH) form a G2 region. Positions 383 to 386 (DTPG) are G3. GTP contacts are provided by residues 383–387 (DTPGH) and 437–440 (NKID). The G4 stretch occupies residues 437-440 (NKID). The interval 473–475 (SAL) is G5.

This sequence belongs to the TRAFAC class translation factor GTPase superfamily. Classic translation factor GTPase family. IF-2 subfamily.

It is found in the cytoplasm. Functionally, one of the essential components for the initiation of protein synthesis. Protects formylmethionyl-tRNA from spontaneous hydrolysis and promotes its binding to the 30S ribosomal subunits. Also involved in the hydrolysis of GTP during the formation of the 70S ribosomal complex. This chain is Translation initiation factor IF-2, found in Rickettsia felis (strain ATCC VR-1525 / URRWXCal2) (Rickettsia azadi).